The primary structure comprises 452 residues: tRNA modification GTPase MnmE (452 aa).

Residues arginine 21, glutamate 78, and lysine 118 each contribute to the (6S)-5-formyl-5,6,7,8-tetrahydrofolate site. Positions 214-375 (GMKVVIAGRP…LREHLKKSMG (162 aa)) constitute a TrmE-type G domain. Asparagine 224 is a binding site for K(+). GTP is bound by residues 224 to 229 (NAGKSS), 243 to 249 (TNIAGTT), and 268 to 271 (DTAG). Position 228 (serine 228) interacts with Mg(2+). K(+) contacts are provided by threonine 243, isoleucine 245, and threonine 248. Threonine 249 is a Mg(2+) binding site. Lysine 452 is a (6S)-5-formyl-5,6,7,8-tetrahydrofolate binding site.

It belongs to the TRAFAC class TrmE-Era-EngA-EngB-Septin-like GTPase superfamily. TrmE GTPase family. In terms of assembly, homodimer. Heterotetramer of two MnmE and two MnmG subunits. The cofactor is K(+).

It localises to the cytoplasm. Exhibits a very high intrinsic GTPase hydrolysis rate. Involved in the addition of a carboxymethylaminomethyl (cmnm) group at the wobble position (U34) of certain tRNAs, forming tRNA-cmnm(5)s(2)U34. This Actinobacillus pleuropneumoniae serotype 5b (strain L20) protein is tRNA modification GTPase MnmE.